An 833-amino-acid chain; its full sequence is MTFYDHTAIEPKWQAFWADNHTFKTGTDASKPKFYALDMFPYPSGAGLHVGHPEGYTATDILSRFKRAQGHNVLHPMGWDAFGLPAEQYAMDTGNDPAEFTAENIANFKRQINALGFSYDWDREVNTTDPNYYKWTQWIFTKLYEKGLAYEAEVPVNWVEELGTAIANEEVLPDGTSERGGYPVVRKPMRQWMLKITAYAERLLEDLEEVDWPESIKDMQRNWIGKSTGANVTFKVKDTDKDFTVFTTRPDTLFGATYAVLAPEHALVDAITTSDQAEAVADYKRQASLKSDLARTDLAKEKTGVWTGSYAINPVNGKEMPVWIADYVLASYGTGAIMAVPAHDERDWEFAKQFNLDIIPVLEGGNVEEAAFTEDGLHINSDFLDGLDKASAIAKMVEWLEAEGVGNENVTYRLRDWLFSRQRYWGEPIPIIHWEDGTSTAVPESELPLVLPVTKDIRPSGTGESPLANVTDWLEVTREDGVKGRRETNTMPQWAGSSWYYLRYIDPHNTEKLADEELLKQWLPVDIYVGGAEHAVLHLLYARFWHKVLYDLGVVPTKEPFQKLFNQGMILGTSYRDSRGALVATDKVEKRDGSFFHVETGEELEQAPAKMSKSLKNVVNPDDVVEQYGADTLRVYEMFMGPLDASIAWSEEGLEGSRKFLDRVYRLITTKEITEENSGALDKVYNETVKAVTEQVDQMKFNTAIAQLMVFVNAANKEDKLFSDYAKGFVQLIAPFAPHLGEELWQALTASGESISYVPWPSYDESKLVENDVEIVVQIKGKVKAKLVVAKDLSREELQEVALANEKVQAEIAGKDIIKVIAVPNKLVNIVIK.

The short motif at 41 to 52 (PYPSGAGLHVGH) is the 'HIGH' region element. A 'KMSKS' region motif is present at residues 610–614 (KMSKS). Lys-613 provides a ligand contact to ATP.

This sequence belongs to the class-I aminoacyl-tRNA synthetase family.

The protein localises to the cytoplasm. The enzyme catalyses tRNA(Leu) + L-leucine + ATP = L-leucyl-tRNA(Leu) + AMP + diphosphate. The sequence is that of Leucine--tRNA ligase from Streptococcus pyogenes serotype M12 (strain MGAS2096).